The primary structure comprises 529 residues: Fusion glycoprotein F0 (529 aa).

Residues 1–26 (MSIMGLKVNVSAIFMAVLLTLQTPTG) form the signal peptide. Residues 27–490 (QIHWGNLSKI…ESSDQILRSM (464 aa)) lie on the Extracellular side of the membrane. N-linked (GlcNAc...) asparagine; by host glycosylation is found at asparagine 32, asparagine 64, and asparagine 70. Residues 72 to 98 (TRVEIAEYRRLLRTVLEPIRDALNAMT) form an HRC region. Positions 116–141 (FAGVVLAGAALGVATAAQITAGIALH) are fusion peptide. Residues 141–169 (HQSMLSSQAIDNLRASLETTNQAIEAIRQ) adopt a coiled-coil conformation. The HRA stretch occupies residues 142–218 (QSMLSSQAID…LLRYYTEILS (77 aa)). 4 cysteine pairs are disulfide-bonded: cysteine 337–cysteine 346, cysteine 361–cysteine 369, cysteine 393–cysteine 398, and cysteine 400–cysteine 423. An interaction with hemagglutinin region spans residues 370 to 447 (ARTLVSGSFG…RRYPDAVDLH (78 aa)). The segment at 448 to 497 (RIDLGPPISLERLDVGTNLGSAIAKLEDAKELLESSDQILRSMKGLSSTS) is HRB. Residues 465 to 490 (NLGSAIAKLEDAKELLESSDQILRSM) are a coiled coil. A helical transmembrane segment spans residues 491 to 521 (KGLSSTSIVYILIAVCLGGLIGIPALICCCR). The Cytoplasmic portion of the chain corresponds to 522–529 (GRCNKKGE).

This sequence belongs to the paramyxoviruses fusion glycoprotein family. In terms of assembly, homotrimer of disulfide-linked F1-F2. In terms of processing, the inactive precursor F0 is glycosylated and proteolytically cleaved into F1 and F2 to be functionally active. The cleavage is mediated by host furin during the transport and maturation of the polypeptide.

Its subcellular location is the virion membrane. The protein localises to the host cell membrane. In terms of biological role, class I viral fusion protein. Under the current model, the protein has at least 3 conformational states: pre-fusion native state, pre-hairpin intermediate state, and post-fusion hairpin state. During viral and plasma cell membrane fusion, the heptad repeat (HR) regions assume a trimer-of-hairpins structure, positioning the fusion peptide in close proximity to the C-terminal region of the ectodomain. The formation of this structure appears to drive apposition and subsequent fusion of viral and plasma cell membranes. Directs fusion of viral and cellular membranes leading to delivery of the nucleocapsid into the cytoplasm. This fusion is pH independent and occurs directly at the outer cell membrane. During viral entry or virus-mediated fusion between infected cells and neighboring susceptible cells, the head domain of the H protein initially binds to its receptor and then the stalk region of the H protein transmits the fusion-triggering signal to the F protein. Upon HN binding to its cellular receptor, the hydrophobic fusion peptide is unmasked and interacts with the cellular membrane, inducing the fusion between cell and virion membranes. Later in infection, F proteins expressed at the plasma membrane of infected cells could mediate fusion with adjacent cells to form syncytia, a cytopathic effect that could lead to tissue necrosis. Some hyperfusogenic isolates can induce membrane fusion in SLAM- and nectin-4-negative cells and are linked to fatal subacute sclerosing panencephalitis (SSPE) or measles inclusion body encephalitis (MIBE). The neuropathogenicity is closely associated with enhanced propagation mediated by cell-to-cell fusion in the brain, which is principally regulated by hyperfusogenic mutations of the viral F protein. Cell-to-cell transmission of the virus also occurs with hyperfusogenic isolates. The polypeptide is Fusion glycoprotein F0 (F) (Homo sapiens (Human)).